A 518-amino-acid polypeptide reads, in one-letter code: Major facilitator superfamily multidrug transporter mfsC (518 aa).

7 helical membrane-spanning segments follow: residues 27 to 47 (VLLTTTVVNFLDLFQLSSVLF), 65 to 85 (WVLIVYNITFAAFLLIAGQLG), 88 to 108 (FGLEKIFIAGTATLTISNVIN), 123 to 143 (ISGVGAGLTAPNGLAILSNTF), 152 to 172 (ALAIYTACGPLGSTIGTVVGS), 183 to 203 (IFWLCLILTGLSTILACLFLP), and 212 to 232 (PIDIPGTVVFTAGVALLVYGL). The N-linked (GlcNAc...) asparagine glycan is linked to Asn-233. A run of 7 helical transmembrane segments spans residues 242–262 (SAAMLTGIILGVCLLFVFLWV), 281–301 (FLVMLVAIFAFGGSFSTWFFI), 315–335 (ILTAVYFLPAAFAAIASGVFA), 347–367 (ILVAGLAITAAGAVAWAFAGP), 380–400 (TAIIFVIGSPVALVPTQSILL), 409–429 (AVAGALFNTAYQVGASVILAG), and 455–475 (AFWLIAGVLGAAALTVMVCYW).

It belongs to the major facilitator superfamily. EmrB family.

It localises to the membrane. Major facilitator superfamily transporter that may be involved in A.fumigatus adaptation to azoles such as vorizonazole. This is Major facilitator superfamily multidrug transporter mfsC from Aspergillus fumigatus (strain ATCC MYA-4609 / CBS 101355 / FGSC A1100 / Af293) (Neosartorya fumigata).